A 198-amino-acid chain; its full sequence is UPF0098 protein PH1269 (198 aa).

It belongs to the UPF0098 family.

The protein is UPF0098 protein PH1269 of Pyrococcus horikoshii (strain ATCC 700860 / DSM 12428 / JCM 9974 / NBRC 100139 / OT-3).